The sequence spans 1902 residues: MQRKKKGLSILLAGTVALGALAVLPVGEIQAKAAISQQTKGSSLANTVTAATAKQAATDTTAATTNQAIATQLAAKGIDYNKLNKVQQQDIYVDVIVQMSAAPASENGTLRTDYSSTAEIQQETNKVIAAQASVKAAVEQVTQQTAGESYGYVVNGFSTKVRVVDIPKLKQIAGVKTVTLAKVYYPTDAKANSMANVQAVWSNYKYKGEGTVVSVIDSGIDPTHKDMRLSDDKDVKLTKSDVEKFTDTAKHGRYFNSKVPYGFNYADNNDTITDDTVDEQHGMHVAGIIGANGTGDDPAKSVVGVAPEAQLLAMKVFTNSDTSATTGSATLVSAIEDSAKIGADVLNMSLGSDSGNQTLEDPELAAVQNANESGTAAVISAGNSGTSGSATEGVNKDYYGLQDNEMVGTPGTSRGATTVASAENTDVITQAVTITDGTGLQLGPETIQLSSNDFTGSFDQKKFYVVKDASGNLSKGKVADYTADAKGKIAIVKRGELTFADKQKYAQAAGAAGLIIVNNDGTATPVTSMALTTTFPTFGLSSVTGQKLVDWVAAHPDDSLGVKIALTLVPNQKYTEDKMSDFTSYGPVSNLSFKPDITAPGGNIWSTQNNNGYTNMSGTSMASPFIAGSQALLKQALNNKNNPFYAYYKQLKGTALTDFLKTVEMNTAQPINDINYNNVIVSPRRQGAGLVDVKAAIDALEKNPSTVVAENGYPAVELKDFTSTDKTFKLTFTNRTTHELTYQMDSNTDTNAVYTSATDPNSGVLYDKKIDGAAIKAGSNITVPAGKTAQIEFTLSLPKSFDQQQFVEGFLNFKGSDGSRLNLPYMGFFGDWNDGKIVDSLNGITYSPAGGNFGTVPLLTNKNTGTQYYGGMVTDADGNQTVDDQAIAFSSDKNALYNDISMKYYLLRNISNVQVDILDGQGNKVTTLSSSTNRKKTYYNAHSQQYIYYHAPAWDGTYYDQRDGNIKTADDGSYTYRISGVPEGGDKRQVFDVPFKLDSKAPTVRHVALSAKTENGKTQYYLTAEAKDDLSGLDATKSVKTAINEVTNLDATFTDAGTTADGYTKIETPLSDEQAQALGNGDNSAELYLTDNASNATDQDASVQKPGSTSFDLIVNGGGIPDKISSTTTGYEANTQGGGTYTFSGTYPAAVDGTYTDAQGKKHDLNTTYDAATNSFTASMPVTNADYAAQVDLYADKAHTQLLKHFDTKVRLTAPTFTDLKFNNGSDQTSEATIKVTGTVSADTKTVNVGDTVAALDAQHHFSVDVPVNYGDNTIKVTATDEDGNTTTEQKTITSSYDPDMLKNSVTFDQGVTFGANEFNATSAKFYDPKTGIATITGKVKHPTTTLQVDGKQIPIKDDLTFSFTLDLGTLGQKPFGVVVGDTTQNKTFQEALTFILDAVAPTLSLDSSTDAPVYTNNPNFQITGTATDNAQYLSLSINGSSVASQYVDININSGKPGHMAIDQPVKLLEGKNVLTVAVTDSEDNTTTKNITVYYEPKKTLAAPTVTPSTTEPAKTVTLTANSAATGETVQYSADGGKTYQDVPAAGVTVTANGTFKFKSTDLYGNESPAVDYVVTNIKADDPAQLQAAKQELTNLIASAKTLSASGKYDDATTTALAAATQKAQTALDQTNASVDSLTGANRDLQTAINQLAAKLPADKKTSLLNQLQSVKAALETDLGNQTDSSTGKTFTAALDDLVAQAQAGTQTDDQLQATLAKVLDAVLAKLAEGIKAATPAEVGNAKDAATGKTWYADIADTLTSGQASADASDKLAHLQALQSLKTKVAAAVEAAKTVGKGDGTTGTSDKGGGQGTPAPTPGDIGKDKGDEGSQPSSGGNIPTNPATTTSTSTDDTTDRNGQLTSGKGALPKTGETTERPAFGFLGVIVVSLMGVLGLKRKQREE.

An N-terminal signal peptide occupies residues M1–A33. Residues A34 to T187 constitute a propeptide that is removed on maturation. Residues A191–I697 form the Peptidase S8 domain. Active-site charge relay system residues include D217, H281, and S620. The tract at residues G1796–T1874 is disordered. A compositionally biased stretch (gly residues) spans K1797–G1812. Residues S1830–A1843 show a composition bias toward polar residues. The LPXTG sorting signal motif lies at L1867 to G1871. A Pentaglycyl murein peptidoglycan amidated threonine modification is found at T1870. A propeptide spans G1871–E1902 (removed by sortase).

It belongs to the peptidase S8 family.

The protein localises to the secreted. The protein resides in the cell wall. It carries out the reaction Endopeptidase activity with very broad specificity, although some subsite preference have been noted, e.g. large hydrophobic residues in the P1 and P4 positions, and Pro in the P2 position. Best known for its action on caseins, although it has been shown to hydrolyze hemoglobin and oxidized insulin B-chain.. Protease which breaks down milk proteins during the growth of the bacteria on milk. In Lactococcus lactis subsp. cremoris (Streptococcus cremoris), this protein is PII-type proteinase (prt).